An 845-amino-acid chain; its full sequence is Synaptonemal complex protein 1 (845 aa).

Residues 59 to 215 form an interaction with SYCE3 region; the sequence is ETRQVYVDLN…YQLTEEKEAQ (157 aa). 2 coiled-coil regions span residues 64–211 and 244–544; these read YVDL…LTEE and LRTE…EIEV. Positions 550 to 644 are required for pH-induced assembly of C-terminal ends into antiparallel tetramers; sequence EKLLGEVEKA…VSLKKQLEIE (95 aa). The Nuclear localization signal signature appears at 553 to 556; it reads LGEV. Positions 620–663 form a coiled coil; that stretch reads KTALETELSNIRNELVSLKKQLEIEREEKEKLKLEKENTAILKD. The DNA-binding stretch occupies residues 657-845; the sequence is NTAILKDKKD…RLKEAEKLFA (189 aa). The residue at position 676 (Ser-676) is a Phosphoserine. Polar residues predominate over residues 684–703; it reads FDSKTTPSQNISRISSSMES. Residues 684 to 709 are disordered; it reads FDSKTTPSQNISRISSSMESGKTKDN. The Nuclear localization signal motif lies at 753-756; it reads KKRK. Residues 786-808 are disordered; sequence LYNNNSPNSHLTPKQTPLSLSTP.

In terms of assembly, structural component of synaptonemal complexes. Homotetramer that consists of an N-terminal four-helical bundle that bifurcates into two elongated C-terminal dimeric coiled coils. This tetrameric building block potentially self-assembles into a supramolecular zipper-like lattice to mediate meiotic chromosome synapsis. Self-assembly is likely initiated by local proton density at chromosome axis, which is predicted to trigger antiparallel back to back assembly of adjacent C-terminal ends into tetrameric structures that anchor to chromosomal DNA. Then the N-terminal ends are predicted to undergo cooperative antiparallel head to head assembly at the midline of synaptonemal complexes central element to form a zipper-like lattice between properly aligned homologous chromosomes. The nascent synapsis generated by SYCP1 is stabilized through interaction with central element proteins SYCE1 and SYCE2. Interacts (via tetrameric core) with SYCE3; the interaction remodels SYCP1 homotetramers to 2:1 heterotrimers with SYCE3. SYCP1/SYCE3 heterotrimers form lattice assemblies as part of the mature synaptonemal complex via both lateral and head-to-head interactions. Forms a complex with EWSR1, PRDM9, SYCP3 and REC8; complex formation is dependent of phosphorylated form of REC8 and requires PRDM9 bound to hotspot DNA; EWSR1 joins PRDM9 with the chromosomal axis through REC8. Interacts with SPO16.

It is found in the nucleus. Its subcellular location is the chromosome. It localises to the centromere. Functionally, major component of the transverse filaments of synaptonemal complexes, formed between homologous chromosomes during meiotic prophase. Required for normal assembly of the central element of the synaptonemal complexes. Required for normal centromere pairing during meiosis. Required for normal meiotic chromosome synapsis during oocyte and spermatocyte development and for normal male and female fertility. The protein is Synaptonemal complex protein 1 of Mesocricetus auratus (Golden hamster).